Here is a 219-residue protein sequence, read N- to C-terminus: Pollen-specific protein SF3 (219 aa).

2 consecutive LIM zinc-binding domains span residues 9-109 and 110-167; these read QKCT…TRDK and CNAC…QLFK. The tract at residues 181–219 is disordered; that stretch reads VAAPAESETQNTETQNAETQNADTQNADTQNTETQNGSV. Residues 185–202 are compositionally biased toward low complexity; sequence AESETQNTETQNAETQNA. Polar residues predominate over residues 203 to 219; the sequence is DTQNADTQNTETQNGSV.

Pollen.

Functionally, could possibly involved in controlling pollen-specific processes such as male gamete maturation, pollen tube formation, or even fertilization. The protein is Pollen-specific protein SF3 (SF3) of Helianthus annuus (Common sunflower).